A 199-amino-acid polypeptide reads, in one-letter code: Crossover junction endodeoxyribonuclease RuvC (199 aa).

Catalysis depends on residues D17, E76, and D148. Mg(2+) contacts are provided by D17, E76, and D148.

Belongs to the RuvC family. As to quaternary structure, homodimer which binds Holliday junction (HJ) DNA. The HJ becomes 2-fold symmetrical on binding to RuvC with unstacked arms; it has a different conformation from HJ DNA in complex with RuvA. In the full resolvosome a probable DNA-RuvA(4)-RuvB(12)-RuvC(2) complex forms which resolves the HJ. It depends on Mg(2+) as a cofactor.

It is found in the cytoplasm. It catalyses the reaction Endonucleolytic cleavage at a junction such as a reciprocal single-stranded crossover between two homologous DNA duplexes (Holliday junction).. In terms of biological role, the RuvA-RuvB-RuvC complex processes Holliday junction (HJ) DNA during genetic recombination and DNA repair. Endonuclease that resolves HJ intermediates. Cleaves cruciform DNA by making single-stranded nicks across the HJ at symmetrical positions within the homologous arms, yielding a 5'-phosphate and a 3'-hydroxyl group; requires a central core of homology in the junction. The consensus cleavage sequence is 5'-(A/T)TT(C/G)-3'. Cleavage occurs on the 3'-side of the TT dinucleotide at the point of strand exchange. HJ branch migration catalyzed by RuvA-RuvB allows RuvC to scan DNA until it finds its consensus sequence, where it cleaves and resolves the cruciform DNA. This Mannheimia succiniciproducens (strain KCTC 0769BP / MBEL55E) protein is Crossover junction endodeoxyribonuclease RuvC.